Reading from the N-terminus, the 154-residue chain is Ribonuclease H (154 aa).

Residues 1–142 (MLKQVEIFTD…CDELARRAAG (142 aa)) enclose the RNase H type-1 domain. Mg(2+) contacts are provided by aspartate 10, glutamate 48, aspartate 70, and aspartate 134.

This sequence belongs to the RNase H family. In terms of assembly, monomer. Mg(2+) serves as cofactor.

It localises to the cytoplasm. It carries out the reaction Endonucleolytic cleavage to 5'-phosphomonoester.. Endonuclease that specifically degrades the RNA of RNA-DNA hybrids. This chain is Ribonuclease H, found in Edwardsiella ictaluri (strain 93-146).